A 443-amino-acid chain; its full sequence is Proline--tRNA ligase (443 aa).

Belongs to the class-II aminoacyl-tRNA synthetase family. ProS type 2 subfamily. In terms of assembly, homodimer.

Its subcellular location is the cytoplasm. The catalysed reaction is tRNA(Pro) + L-proline + ATP = L-prolyl-tRNA(Pro) + AMP + diphosphate. In terms of biological role, catalyzes the attachment of proline to tRNA(Pro) in a two-step reaction: proline is first activated by ATP to form Pro-AMP and then transferred to the acceptor end of tRNA(Pro). This chain is Proline--tRNA ligase, found in Zymomonas mobilis subsp. mobilis (strain ATCC 31821 / ZM4 / CP4).